A 395-amino-acid polypeptide reads, in one-letter code: Succinyl-diaminopimelate desuccinylase (395 aa).

His-74 is a Zn(2+) binding site. Residue Asp-76 is part of the active site. Residue Asp-107 participates in Zn(2+) binding. The Proton acceptor role is filled by Glu-141. Zn(2+)-binding residues include Glu-142, Glu-170, and His-368.

This sequence belongs to the peptidase M20A family. DapE subfamily. In terms of assembly, homodimer. Zn(2+) serves as cofactor. Co(2+) is required as a cofactor.

The catalysed reaction is N-succinyl-(2S,6S)-2,6-diaminopimelate + H2O = (2S,6S)-2,6-diaminopimelate + succinate. The protein operates within amino-acid biosynthesis; L-lysine biosynthesis via DAP pathway; LL-2,6-diaminopimelate from (S)-tetrahydrodipicolinate (succinylase route): step 3/3. Functionally, catalyzes the hydrolysis of N-succinyl-L,L-diaminopimelic acid (SDAP), forming succinate and LL-2,6-diaminopimelate (DAP), an intermediate involved in the bacterial biosynthesis of lysine and meso-diaminopimelic acid, an essential component of bacterial cell walls. The protein is Succinyl-diaminopimelate desuccinylase of Brucella abortus (strain S19).